A 553-amino-acid chain; its full sequence is Methionine--tRNA ligase (553 aa).

A 'HIGH' region motif is present at residues 12 to 22 (PYANSQLHLGH). Residues Cys144, Cys147, Cys157, and Cys160 each contribute to the Zn(2+) site. Positions 332–336 (KFSKS) match the 'KMSKS' region motif. Lys335 provides a ligand contact to ATP.

This sequence belongs to the class-I aminoacyl-tRNA synthetase family. MetG type 1 subfamily. As to quaternary structure, monomer. Requires Zn(2+) as cofactor.

It is found in the cytoplasm. It catalyses the reaction tRNA(Met) + L-methionine + ATP = L-methionyl-tRNA(Met) + AMP + diphosphate. Is required not only for elongation of protein synthesis but also for the initiation of all mRNA translation through initiator tRNA(fMet) aminoacylation. The chain is Methionine--tRNA ligase from Dehalococcoides mccartyi (strain CBDB1).